The sequence spans 432 residues: Adenylosuccinate synthetase (432 aa).

GTP is bound by residues 13–19 (GDEGKGK) and 41–43 (GHT). D14 acts as the Proton acceptor in catalysis. 2 residues coordinate Mg(2+): D14 and G41. IMP-binding positions include 14–17 (DEGK), 39–42 (NAGH), T130, R144, Q225, T240, and R304. H42 functions as the Proton donor in the catalytic mechanism. Residue 300-306 (ATTGRRR) coordinates substrate. Residues R306, 332–334 (KLD), and 415–417 (STG) contribute to the GTP site.

The protein belongs to the adenylosuccinate synthetase family. Homodimer. The cofactor is Mg(2+).

The protein localises to the cytoplasm. The catalysed reaction is IMP + L-aspartate + GTP = N(6)-(1,2-dicarboxyethyl)-AMP + GDP + phosphate + 2 H(+). It functions in the pathway purine metabolism; AMP biosynthesis via de novo pathway; AMP from IMP: step 1/2. Plays an important role in the de novo pathway of purine nucleotide biosynthesis. Catalyzes the first committed step in the biosynthesis of AMP from IMP. The polypeptide is Adenylosuccinate synthetase (Klebsiella pneumoniae (strain 342)).